An 87-amino-acid chain; its full sequence is NADH dehydrogenase [ubiquinone] 1 alpha subcomplex subunit 4-like 2 (87 aa).

This sequence belongs to the complex I NDUFA4 subunit family.

This is NADH dehydrogenase [ubiquinone] 1 alpha subcomplex subunit 4-like 2 (NDUFA4L2) from Bos taurus (Bovine).